Reading from the N-terminus, the 501-residue chain is Type B diterpene cyclase (501 aa).

This sequence belongs to the terpene synthase family. Monomer. Requires Mg(2+) as cofactor.

It catalyses the reaction geranylgeranyl diphosphate = tuberculosinyl diphosphate. Its activity is regulated as follows. Strongly inhibited by 15-aza-dihydrogeranylgeraniol and 5-isopropyl-N,N,N,2-tetramethyl-4-(piperidine-1-carbonyloxy)benzenaminium chloride (Amo-1618). Inhibited by GGPP concentrations higher than 50 uM. Its function is as follows. Catalyzes the formation of tuberculosinyl diphosphate from geranylgeranyl diphosphate (GGPP). It could also react with (14R/S)-14,15-oxidoGGPP to generate 3alpha- and 3beta-hydroxytuberculosinyl diphosphate. This chain is Type B diterpene cyclase, found in Mycobacterium tuberculosis (strain ATCC 25618 / H37Rv).